The following is a 184-amino-acid chain: ATP synthase subunit b 1 (184 aa).

Residues 4-24 (LSILAALAASPAMAATGPFFS) form a helical membrane-spanning segment.

Belongs to the ATPase B chain family. As to quaternary structure, F-type ATPases have 2 components, F(1) - the catalytic core - and F(0) - the membrane proton channel. F(1) has five subunits: alpha(3), beta(3), gamma(1), delta(1), epsilon(1). F(0) has three main subunits: a(1), b(2) and c(10-14). The alpha and beta chains form an alternating ring which encloses part of the gamma chain. F(1) is attached to F(0) by a central stalk formed by the gamma and epsilon chains, while a peripheral stalk is formed by the delta and b chains.

It is found in the cell inner membrane. Functionally, f(1)F(0) ATP synthase produces ATP from ADP in the presence of a proton or sodium gradient. F-type ATPases consist of two structural domains, F(1) containing the extramembraneous catalytic core and F(0) containing the membrane proton channel, linked together by a central stalk and a peripheral stalk. During catalysis, ATP synthesis in the catalytic domain of F(1) is coupled via a rotary mechanism of the central stalk subunits to proton translocation. Component of the F(0) channel, it forms part of the peripheral stalk, linking F(1) to F(0). The chain is ATP synthase subunit b 1 from Cereibacter sphaeroides (strain ATCC 17025 / ATH 2.4.3) (Rhodobacter sphaeroides).